Consider the following 232-residue polypeptide: Peptidoglycan-recognition protein LB (232 aa).

A signal peptide spans 1-15; the sequence is MTALGLVLLSMMGYS. The N-acetylmuramoyl-L-alanine amidase domain maps to 53-179; that stretch reads APYVIIHHSY…RQVRDTECPG (127 aa). Residue H59 coordinates Zn(2+). An intrachain disulfide couples C67 to C73. H169 and C177 together coordinate Zn(2+). N196 carries an N-linked (GlcNAc...) asparagine glycan. Residues 213–232 form a disordered region; it reads HPQAAAPQKPHQSPPAAPKV.

Belongs to the N-acetylmuramoyl-L-alanine amidase 2 family. Monomer. It depends on Zn(2+) as a cofactor. Widely expressed.

It localises to the secreted. It catalyses the reaction Hydrolyzes the link between N-acetylmuramoyl residues and L-amino acid residues in certain cell-wall glycopeptides.. In terms of biological role, N-acetylmuramyl-L-alanine amidase involved in innate immunity by degrading bacterial peptidoglycans (PGN). Probably plays a scavenger role by digesting biologically active PGN into biologically inactive fragments. Has no direct bacteriolytic activity. The chain is Peptidoglycan-recognition protein LB (PGRP-LB) from Drosophila melanogaster (Fruit fly).